Reading from the N-terminus, the 240-residue chain is Sugar fermentation stimulation protein homolog (240 aa).

Belongs to the SfsA family.

The sequence is that of Sugar fermentation stimulation protein homolog from Pasteurella multocida (strain Pm70).